The primary structure comprises 311 residues: Nudix hydrolase 9 (311 aa).

The 168-residue stretch at 131-298 (SSPLGNGAVI…GFALYELMLQ (168 aa)) folds into the Nudix hydrolase domain. Positions 192–213 (LNKKVTQEMFDSIICEVVEETG) match the Nudix box motif. Residues E207 and E211 each contribute to the Mg(2+) site.

It belongs to the Nudix hydrolase family. Mg(2+) serves as cofactor. Requires Mn(2+) as cofactor. As to expression, expressed in roots, stems and leaves.

Probably mediates the hydrolysis of some nucleoside diphosphate derivatives. The polypeptide is Nudix hydrolase 9 (NUDT9) (Arabidopsis thaliana (Mouse-ear cress)).